A 274-amino-acid chain; its full sequence is Ribose-5-phosphate isomerase (274 aa).

This sequence belongs to the ribose 5-phosphate isomerase family.

The protein localises to the cytoplasm. It carries out the reaction aldehydo-D-ribose 5-phosphate = D-ribulose 5-phosphate. It functions in the pathway carbohydrate degradation; pentose phosphate pathway; D-ribose 5-phosphate from D-ribulose 5-phosphate (non-oxidative stage): step 1/1. The sequence is that of Ribose-5-phosphate isomerase (rki1) from Schizosaccharomyces pombe (strain 972 / ATCC 24843) (Fission yeast).